Consider the following 294-residue polypeptide: 33 kDa chaperonin (294 aa).

Disulfide bonds link C238-C240 and C271-C274.

The protein belongs to the HSP33 family. Under oxidizing conditions two disulfide bonds are formed involving the reactive cysteines. Under reducing conditions zinc is bound to the reactive cysteines and the protein is inactive.

It is found in the cytoplasm. Functionally, redox regulated molecular chaperone. Protects both thermally unfolding and oxidatively damaged proteins from irreversible aggregation. Plays an important role in the bacterial defense system toward oxidative stress. This Clostridium tetani (strain Massachusetts / E88) protein is 33 kDa chaperonin.